The sequence spans 1166 residues: ATP-dependent helicase/deoxyribonuclease subunit B (1166 aa).

Residues 1-290 (MGMRFILGRS…DTLEGNFQNR (290 aa)) enclose the UvrD-like helicase ATP-binding domain. 8–15 (GRSGTNKS) provides a ligand contact to ATP. A UvrD-like helicase C-terminal domain is found at 283–588 (LEGNFQNRPY…QFSHVPPSMD (306 aa)). Residues Cys-802, Cys-1123, Cys-1126, and Cys-1132 each contribute to the [4Fe-4S] cluster site.

The protein belongs to the helicase family. AddB/RexB type 1 subfamily. In terms of assembly, heterodimer of AddA and AddB. Mg(2+) serves as cofactor. Requires [4Fe-4S] cluster as cofactor.

Its function is as follows. The heterodimer acts as both an ATP-dependent DNA helicase and an ATP-dependent, dual-direction single-stranded exonuclease. Recognizes the chi site generating a DNA molecule suitable for the initiation of homologous recombination. The AddB subunit has 5' -&gt; 3' nuclease activity but not helicase activity. The sequence is that of ATP-dependent helicase/deoxyribonuclease subunit B from Oceanobacillus iheyensis (strain DSM 14371 / CIP 107618 / JCM 11309 / KCTC 3954 / HTE831).